The chain runs to 331 residues: 6-phosphogluconolactonase (331 aa).

An N6-acetyllysine modification is found at K287.

It belongs to the cycloisomerase 2 family.

It catalyses the reaction 6-phospho-D-glucono-1,5-lactone + H2O = 6-phospho-D-gluconate + H(+). The protein operates within carbohydrate degradation; pentose phosphate pathway; D-ribulose 5-phosphate from D-glucose 6-phosphate (oxidative stage): step 2/3. Catalyzes the hydrolysis of 6-phosphogluconolactone to 6-phosphogluconate. The polypeptide is 6-phosphogluconolactonase (Escherichia fergusonii (strain ATCC 35469 / DSM 13698 / CCUG 18766 / IAM 14443 / JCM 21226 / LMG 7866 / NBRC 102419 / NCTC 12128 / CDC 0568-73)).